The sequence spans 279 residues: Putative pyruvate, phosphate dikinase regulatory protein (279 aa).

Residue 157–164 coordinates ADP; it reads GVSRTSKT.

The protein belongs to the pyruvate, phosphate/water dikinase regulatory protein family. PDRP subfamily.

The enzyme catalyses N(tele)-phospho-L-histidyl/L-threonyl-[pyruvate, phosphate dikinase] + ADP = N(tele)-phospho-L-histidyl/O-phospho-L-threonyl-[pyruvate, phosphate dikinase] + AMP + H(+). It carries out the reaction N(tele)-phospho-L-histidyl/O-phospho-L-threonyl-[pyruvate, phosphate dikinase] + phosphate + H(+) = N(tele)-phospho-L-histidyl/L-threonyl-[pyruvate, phosphate dikinase] + diphosphate. In terms of biological role, bifunctional serine/threonine kinase and phosphorylase involved in the regulation of the pyruvate, phosphate dikinase (PPDK) by catalyzing its phosphorylation/dephosphorylation. The protein is Putative pyruvate, phosphate dikinase regulatory protein of Lactobacillus helveticus (strain DPC 4571).